The sequence spans 620 residues: Acetylcholinesterase 1 (620 aa).

The first 31 residues, 1-31 (MRNSLLFFIFLPSTILAVDLIHLHDGSPLFG), serve as a signal peptide directing secretion. Asn74 carries N-linked (GlcNAc...) asparagine glycosylation. Cys82 and Cys109 form a disulfide bridge. The Acyl-ester intermediate role is filled by Ser216. A disulfide bridge connects residues Cys270 and Cys286. Residue Asn272 is glycosylated (N-linked (GlcNAc...) asparagine). Catalysis depends on charge relay system residues Glu346 and His468. A disulfide bridge links Cys430 with Cys558. Residues Asn486 and Asn536 are each glycosylated (N-linked (GlcNAc...) asparagine).

It belongs to the type-B carboxylesterase/lipase family. As to quaternary structure, oligomer composed of disulfide-linked homodimers.

The protein resides in the synapse. Its subcellular location is the secreted. It is found in the cell membrane. It carries out the reaction acetylcholine + H2O = choline + acetate + H(+). Rapidly hydrolyzes acetylcholine and releases choline into the synapse. It can hydrolyze propionylcholine and butyrylthiocholine in vitro. The protein is Acetylcholinesterase 1 (ace-1) of Caenorhabditis elegans.